Reading from the N-terminus, the 691-residue chain is UvrABC system protein C (691 aa).

The GIY-YIG domain occupies 20–97; it reads STSGVYLWKD…IKKHTPRYNI (78 aa). The region spanning 204 to 239 is the UVR domain; sequence DATVARLEKRMKRAVRQEAFEAAARIRDDIQAIRCI. The tract at residues 662-691 is disordered; the sequence is RSTTAPVREEYKEHEHDPQGESPGPGRKTD. Residues 668–680 show a composition bias toward basic and acidic residues; it reads VREEYKEHEHDPQ.

Belongs to the UvrC family. In terms of assembly, interacts with UvrB in an incision complex.

Its subcellular location is the cytoplasm. Its function is as follows. The UvrABC repair system catalyzes the recognition and processing of DNA lesions. UvrC both incises the 5' and 3' sides of the lesion. The N-terminal half is responsible for the 3' incision and the C-terminal half is responsible for the 5' incision. This chain is UvrABC system protein C, found in Treponema pallidum (strain Nichols).